The chain runs to 400 residues: Elongation factor Tu (400 aa).

The tr-type G domain occupies 10–208 (KPHVNVGTIG…AMDNYIPDPQ (199 aa)). Positions 19 to 26 (GHIDHGKS) are G1. A GTP-binding site is contributed by 19-26 (GHIDHGKS). Ser-26 is a binding site for Mg(2+). Positions 60–64 (GITIN) are G2. The segment at 81 to 84 (DCPG) is G3. Residues 81–85 (DCPGH) and 136–139 (NKTD) each bind GTP. A G4 region spans residues 136-139 (NKTD). Positions 174–176 (SAL) are G5.

The protein belongs to the TRAFAC class translation factor GTPase superfamily. Classic translation factor GTPase family. EF-Tu/EF-1A subfamily. Monomer.

Its subcellular location is the cytoplasm. The catalysed reaction is GTP + H2O = GDP + phosphate + H(+). In terms of biological role, GTP hydrolase that promotes the GTP-dependent binding of aminoacyl-tRNA to the A-site of ribosomes during protein biosynthesis. The chain is Elongation factor Tu from Thermotoga neapolitana (strain ATCC 49049 / DSM 4359 / NBRC 107923 / NS-E).